The primary structure comprises 233 residues: Small ribosomal subunit protein uS3 (233 aa).

One can recognise a KH type-2 domain in the interval 39–107 (IRAFLKRKLY…DVNINIKEER (69 aa)). Residues 212-222 (MQPEKTEESAP) are compositionally biased toward basic and acidic residues. Residues 212–233 (MQPEKTEESAPAKKSRRTRRGK) are disordered. Residues 224 to 233 (KKSRRTRRGK) show a composition bias toward basic residues.

It belongs to the universal ribosomal protein uS3 family. In terms of assembly, part of the 30S ribosomal subunit. Forms a tight complex with proteins S10 and S14.

Its function is as follows. Binds the lower part of the 30S subunit head. Binds mRNA in the 70S ribosome, positioning it for translation. The polypeptide is Small ribosomal subunit protein uS3 (Campylobacter jejuni subsp. doylei (strain ATCC BAA-1458 / RM4099 / 269.97)).